The primary structure comprises 323 residues: uncharacterized protein (323 aa).

A run of 2 helical transmembrane segments spans residues 232–252 (LASY…FIVL) and 267–287 (SLIV…GVIG).

It belongs to the glycosyltransferase 2 family. GtrB subfamily.

The protein localises to the cell membrane. This is an uncharacterized protein from Bacillus subtilis (strain 168).